The primary structure comprises 148 residues: Transcription antitermination protein NusB (148 aa).

Belongs to the NusB family.

Functionally, involved in transcription antitermination. Required for transcription of ribosomal RNA (rRNA) genes. Binds specifically to the boxA antiterminator sequence of the ribosomal RNA (rrn) operons. This is Transcription antitermination protein NusB from Saccharopolyspora erythraea (strain ATCC 11635 / DSM 40517 / JCM 4748 / NBRC 13426 / NCIMB 8594 / NRRL 2338).